A 366-amino-acid polypeptide reads, in one-letter code: tRNA-specific 2-thiouridylase MnmA (366 aa).

ATP-binding positions include 6–13 (AMSGGVDS) and Leu32. Cys101 (nucleophile) is an active-site residue. A disulfide bridge links Cys101 with Cys197. Gly125 lines the ATP pocket. Residues 147 to 149 (KDQ) are interaction with tRNA. Catalysis depends on Cys197, which acts as the Cysteine persulfide intermediate.

This sequence belongs to the MnmA/TRMU family.

The protein localises to the cytoplasm. It carries out the reaction S-sulfanyl-L-cysteinyl-[protein] + uridine(34) in tRNA + AH2 + ATP = 2-thiouridine(34) in tRNA + L-cysteinyl-[protein] + A + AMP + diphosphate + H(+). In terms of biological role, catalyzes the 2-thiolation of uridine at the wobble position (U34) of tRNA, leading to the formation of s(2)U34. The chain is tRNA-specific 2-thiouridylase MnmA from Cutibacterium acnes (strain DSM 16379 / KPA171202) (Propionibacterium acnes).